The following is a 344-amino-acid chain: Late embryogenesis abundant protein 17 (344 aa).

Disordered regions lie at residues 1 to 20 (MASRQDRREARAEADARRAA) and 116 to 258 (KDYT…QGQG). Residues 3-52 (SRQDRREARAEADARRAAEEIARARDERVMQAEVDARSAADEIARARADR) adopt a coiled-coil conformation. 3 stretches are compositionally biased toward basic and acidic residues: residues 116 to 163 (KDYT…KDAV), 172 to 230 (EATK…DATK), and 238 to 252 (DKARETAATHDDATD).

The protein belongs to the LEA type 4 family. In terms of tissue distribution, expressed in embryos.

It is found in the nucleus. Involved in abiotic stress responses. May function as chaperone and contribute to prevent the formation of damaging protein aggregates. This is Late embryogenesis abundant protein 17 from Oryza sativa subsp. japonica (Rice).